A 905-amino-acid chain; its full sequence is FIGNL1-interacting regulator of recombination and mitosis (905 aa).

A phosphoserine mark is found at serine 101 and serine 796. Lysine 845 carries the N6-acetyllysine modification.

As to quaternary structure, interacts (via its N-terminal region) with PLK1; controls PLK1 kinase activity. Interacts (via the KVVXF motif) with PPP1CC; controls PLK1 kinase activity. Interacts with FIGNL1; may regulate homologous recombination. Post-translationally, phosphorylation at Ser-101 by PLK1 strengthens FIRRM-PLK1 interaction. Phosphorylation at Ser-796 by PLK1 negatively regulates its interaction with PPP1CC.

It localises to the chromosome. The protein resides in the centromere. It is found in the kinetochore. Its subcellular location is the nucleus. The protein localises to the midbody. It localises to the cytoplasm. The protein resides in the cytoskeleton. It is found in the spindle. Its function is as follows. Regulates PLK1 kinase activity at kinetochores and promotes faithful chromosome segregation in prometaphase by bridging kinase and phosphatase activities. Phosphorylation of FIRRM by PLK1 negatively regulates its interaction with the phosphatase, PPP1CC, thus creating a negative feedback loop for maintaining proper PLK1 kinase activity during mitosis. In complex with FIGL1 may regulate homologous recombination. This is FIGNL1-interacting regulator of recombination and mitosis from Rattus norvegicus (Rat).